The chain runs to 4092 residues: Dynein heavy chain, cytoplasmic (4092 aa).

Positions 1-1757 (MCKNEARLAN…FISQSGYLLQ (1757 aa)) are stem. Coiled coils occupy residues 154–175 (VETI…QQLH), 486–508 (KLEQ…LQNT), 542–566 (KVLE…TGLE), 932–959 (VIKL…YVKE), 1042–1063 (YERD…VEDM), and 1681–1705 (KGLL…LVEY). AAA stretches follow at residues 1758–1979 (YKFE…VLRN), 2036–2273 (QCLK…NDLV), 2379–2628 (SLEA…LVRG), and 2722–2984 (TFCD…KVGV). Residues 1796-1803 (GPAGTGKT), 2074-2081 (GKAGCGKT), 2418-2425 (GPPGSGKT), and 2760-2767 (GASRTGKT) contribute to the ATP site. Coiled-coil stretches lie at residues 2993–3092 (IDGL…KRKE), 3242–3300 (KTKA…KSLT), and 3532–3608 (ITLT…EEFF). Residues 2993–3300 (IDGLRALVKL…RSISLVKSLT (308 aa)) form a stalk region. 2 AAA regions span residues 3370-3599 (LVTL…NIEK) and 3760-3970 (LNWF…YLEN).

It belongs to the dynein heavy chain family. As to quaternary structure, the dynein complex consists of at least two heavy chains and a number of intermediate and light chains. Interacts with DYN3.

The protein localises to the cytoplasm. It localises to the cytoskeleton. Its function is as follows. Cytoplasmic dynein acts as a motor for the intracellular retrograde motility of vesicles and organelles along microtubules. Dynein has ATPase activity; the force-producing power stroke is thought to occur on release of ADP. Required to maintain uniform nuclear distribution in hyphae. May play an important role in the proper orientation of the mitotic spindle into the budding daughter cell yeast. Probably required for normal progression of the cell cycle. The sequence is that of Dynein heavy chain, cytoplasmic (DYN1) from Saccharomyces cerevisiae (strain ATCC 204508 / S288c) (Baker's yeast).